We begin with the raw amino-acid sequence, 251 residues long: Ell1-associated factor 1 (251 aa).

2 disordered regions span residues 110-187 and 201-251; these read SKTV…DMEV and FDQE…EDED. Positions 112–123 are enriched in polar residues; it reads TVPSNAITQSDN. The segment covering 124–135 has biased composition (low complexity); that stretch reads SQISESKSTSQS. A compositionally biased stretch (basic and acidic residues) spans 143–157; sequence RRKEKELEASKDGKI. 2 stretches are compositionally biased toward polar residues: residues 204 to 220 and 236 to 251; these read EFNSIDDPSTVSQTASK and SSAQAEGISSASEDED. S247 is modified (phosphoserine).

The protein belongs to the EAF family. In terms of assembly, forms a stable heterodimer with ell1. Ell1-eaf1 complex interacts with RNA polymerase II.

Its subcellular location is the nucleus. Activates transcription elongation by RNA polymerase II and pyrophosphorolysis as a complex with ell1. Acts as a transcriptional transactivator of ell1 elongation activities. The polypeptide is Ell1-associated factor 1 (eaf1) (Schizosaccharomyces pombe (strain 972 / ATCC 24843) (Fission yeast)).